A 271-amino-acid chain; its full sequence is Probable WRKY transcription factor 69 (271 aa).

Disordered regions lie at residues 1–47 and 130–166; these read MHRR…NVEK and PSSSANTKSHHRSSVVLKTAKKEEEYEEEEEELTVTA. A compositionally biased stretch (acidic residues) spans 9 to 18; the sequence is ESDDEEDETY. Positions 64-130 form a DNA-binding region, WRKY; that stretch reads GEVYPPSDSW…YACDHNHPFP (67 aa).

The protein belongs to the WRKY group II-e family.

Its subcellular location is the nucleus. Transcription factor. Interacts specifically with the W box (5'-(T)TGAC[CT]-3'), a frequently occurring elicitor-responsive cis-acting element. The sequence is that of Probable WRKY transcription factor 69 (WRKY69) from Arabidopsis thaliana (Mouse-ear cress).